The chain runs to 498 residues: Lysine--tRNA ligase (498 aa).

Positions 409 and 416 each coordinate Mg(2+).

It belongs to the class-II aminoacyl-tRNA synthetase family. As to quaternary structure, homodimer. It depends on Mg(2+) as a cofactor.

The protein resides in the cytoplasm. It catalyses the reaction tRNA(Lys) + L-lysine + ATP = L-lysyl-tRNA(Lys) + AMP + diphosphate. The protein is Lysine--tRNA ligase of Dichelobacter nodosus (strain VCS1703A).